A 172-amino-acid chain; its full sequence is Translation initiation factor IF-3 (172 aa).

Belongs to the IF-3 family. Monomer.

The protein resides in the cytoplasm. Functionally, IF-3 binds to the 30S ribosomal subunit and shifts the equilibrium between 70S ribosomes and their 50S and 30S subunits in favor of the free subunits, thus enhancing the availability of 30S subunits on which protein synthesis initiation begins. In Campylobacter curvus (strain 525.92), this protein is Translation initiation factor IF-3.